The following is a 303-amino-acid chain: Formylglycine-generating enzyme (303 aa).

The Ca(2+) site is built by Asn-188, Ile-189, Asp-202, Tyr-204, Asn-222, Val-223, Gly-225, and Val-227. Cu(+) is bound by residues Cys-269 and Cys-274.

This sequence belongs to the sulfatase-modifying factor family. Requires Cu(+) as cofactor.

It carries out the reaction L-cysteinyl-[sulfatase] + 2 a thiol + O2 = an organic disulfide + 3-oxo-L-alanyl-[sulfatase] + hydrogen sulfide + H2O + H(+). It functions in the pathway protein modification; sulfatase oxidation. Its function is as follows. Oxidase that catalyzes the conversion of cysteine to 3-oxoalanine on target proteins. 3-oxoalanine modification, which is also named formylglycine (fGly), occurs in the maturation of arylsulfatases and some alkaline phosphatases that use the hydrated form of 3-oxoalanine as a catalytic nucleophile. The sequence is that of Formylglycine-generating enzyme from Thermomonospora curvata (strain ATCC 19995 / DSM 43183 / JCM 3096 / KCTC 9072 / NBRC 15933 / NCIMB 10081 / Henssen B9).